A 234-amino-acid polypeptide reads, in one-letter code: Cyclo(L-leucyl-L-leucyl) synthase (234 aa).

The active-site Nucleophile is the serine 28. Substrate is bound by residues 171 to 175 (YVLAE), tyrosine 195, and 200 to 201 (EL).

It belongs to the CDPS family.

It catalyses the reaction 2 L-leucyl-tRNA(Leu) = cyclo(L-leucyl-L-leucyl) + 2 tRNA(Leu) + 2 H(+). Functionally, it uses activated amino acids in the form of aminoacyl-tRNAs (aa-tRNAs) as substrates to catalyze the ATP-independent formation of cyclodipeptides which are intermediates in diketopiperazine (DKP) biosynthetic pathways. Catalyzes the formation of cyclo(L-Leu-L-Leu) (cLL) from L-leucyl-tRNA(Leu). Can incorporate various nonpolar residues, such as L-phenylalanine, L-leucine and L-methionine, into cyclodipeptides. The protein is Cyclo(L-leucyl-L-leucyl) synthase of Staphylococcus haemolyticus (strain JCSC1435).